The sequence spans 564 residues: 4-hydroxybutyrate--CoA ligase 1 (564 aa).

A helical transmembrane segment spans residues 105-125; sequence VHPMHWAVFLAVIKGGFVMVP. ATP contacts are provided by residues 204-212, 343-348, D429, and R444; these read TSGTTGMPK and DFYGQT. T348 is a substrate binding site. Residue 452–454 participates in CoA binding; it reads SDY. Residue R455 participates in substrate binding. Residues R484, K513, and 521–523 each bind CoA; that span reads VPR. Position 538 (K538) interacts with ATP.

The protein belongs to the ATP-dependent AMP-binding enzyme family. Requires Mg(2+) as cofactor. Mn(2+) serves as cofactor.

Its subcellular location is the membrane. It carries out the reaction 4-hydroxybutanoate + ATP + CoA = 4-hydroxybutanoyl-CoA + AMP + diphosphate. The catalysed reaction is acetate + ATP + CoA = acetyl-CoA + AMP + diphosphate. The enzyme catalyses propanoate + ATP + CoA = propanoyl-CoA + AMP + diphosphate. It catalyses the reaction a medium-chain fatty acid + ATP + CoA = a medium-chain fatty acyl-CoA + AMP + diphosphate. Involved in the 3-hydroxypropionate/4-hydroxybutyrate cycle which incorporates carbon dioxide into cellular carbon. Catalyzes the ligation of coenzyme A (CoA) to 4-hydroxybutyrate (4HB). It can also use butyrate, valerate, propionate, acetate and 3-hydroxybutyrate (3HB) as substrates. This is 4-hydroxybutyrate--CoA ligase 1 from Metallosphaera sedula (strain ATCC 51363 / DSM 5348 / JCM 9185 / NBRC 15509 / TH2).